Reading from the N-terminus, the 311-residue chain is MNPKRSFQALILTLHNYWADKGCAVLQPYDMEVGAGTFHPATTLRALGPKPWRAAYVQPSRRPTDGRYGENPNRLQHYYQYQVILKPNPSNLQELYLGSLEAIGLDPLLHDIRFVEDDWESPTLGAWGLGWECWCDGMEVSQFTYFQQVCGIECSPVSGELTYGLERLAMYVQGVDNVYDLNFNGREGAEKISYGDVFLQAEQEYSRHNFEYANTAMLHQHFIDAEKECLALLAAGAPGDSSNNRLHKCVFPAYDQCIKASHVFNLLDARGVISVTERQSYILRVRTLAKACGEAFLLTEAGGANWNREAA.

This sequence belongs to the class-II aminoacyl-tRNA synthetase family. As to quaternary structure, tetramer of two alpha and two beta subunits.

It is found in the cytoplasm. It catalyses the reaction tRNA(Gly) + glycine + ATP = glycyl-tRNA(Gly) + AMP + diphosphate. This chain is Glycine--tRNA ligase alpha subunit, found in Rhizobium meliloti (strain 1021) (Ensifer meliloti).